The primary structure comprises 88 residues: MVKLRLKRCGRKQRAVYRIVVIDVRSRREGRDLRKVGFYDPINNQTYLNVPAILYFLEKGAQPTATVHDILKKAGVFTELTLNQTKFT.

Belongs to the bacterial ribosomal protein bS16 family.

It localises to the plastid. The protein localises to the chloroplast. In Gossypium barbadense (Sea Island cotton), this protein is Small ribosomal subunit protein bS16c.